The chain runs to 147 residues: Hemoglobin subunit gamma-1 (147 aa).

Residues Asn3–His147 enclose the Globin domain. Phosphothreonine is present on Thr13. Phosphoserine occurs at positions 45, 51, and 53. Residue Lys60 is modified to N6-acetyllysine. His64 lines the heme b pocket. Lys83 carries the post-translational modification N6-acetyllysine. His93 is a binding site for heme b. Cys94 bears the S-nitrosocysteine mark. Ser140 is modified (phosphoserine).

The protein belongs to the globin family. Heterotetramer of two alpha chains and two gamma chains in fetal hemoglobin (Hb F). As to expression, red blood cells.

Functionally, gamma chains make up the fetal hemoglobin F, in combination with alpha chains. This Plecturocebus moloch (Dusky titi monkey) protein is Hemoglobin subunit gamma-1 (HBG1).